The chain runs to 367 residues: Glutamate 5-kinase (367 aa).

Residue K9 participates in ATP binding. Residues S49, D136, and N148 each contribute to the substrate site. ATP is bound by residues 168-169 (TD) and 210-216 (TGGMKSK). A PUA domain is found at 276-350 (SGQIEIDAGA…GMQSQQIQAR (75 aa)).

It belongs to the glutamate 5-kinase family.

Its subcellular location is the cytoplasm. It catalyses the reaction L-glutamate + ATP = L-glutamyl 5-phosphate + ADP. It functions in the pathway amino-acid biosynthesis; L-proline biosynthesis; L-glutamate 5-semialdehyde from L-glutamate: step 1/2. Functionally, catalyzes the transfer of a phosphate group to glutamate to form L-glutamate 5-phosphate. This Bacillus anthracis protein is Glutamate 5-kinase.